A 24-amino-acid chain; its full sequence is Hemocyanin subunit 4e (24 aa).

Belongs to the tyrosinase family. Hemocyanin subfamily. Hemolymph.

It localises to the secreted. It is found in the extracellular space. Functionally, hemocyanins are copper-containing oxygen carriers occurring freely dissolved in the hemolymph of many mollusks and arthropods. This Maja squinado (Mediterranean spider crab) protein is Hemocyanin subunit 4e.